The sequence spans 456 residues: MAAFARMVKGQVRSYSAPVDMAIPASKRKFIPSSGSYPKGFVVSGTHVGVKASNTKFPDLALISSETPCSAAAVFTTNKFQAAPVQVSRDIIKTRQGQGIRSVVINSGCANAVTGKGGLEDAVSMGKKVDECDGLNEPSTLVMSTGVIGQRLPISKILKKVPVAHANLSSTHDAWLTTARAICTTDTFPKLLSRTFTLPSSPGRTYSLAGMTKGAGMIHPNMATLLGVLCTDAPIEPSALQSLLKHSVNRSFNSISVDGDTSTNDTIAILANGAAGGAPISSSSSDDYAAMQDILTSFAQSLSQLVVRDGEGATKFVTVRVQNSPDYESGRLIASTIARSPLVKTALYGKDANWGRILCAIGYTQGVAPGTVVPEHTSVSFKPVDGSPVLNLLVNGEPEQVDEERASVILQEEDLEIVVDLGGGEKGEQGLGGEEAVYWFCDFSHEYVTINGDYRT.

Substrate is bound by residues T184, K213, T224, E311, N451, and T456. T224 (nucleophile) is an active-site residue.

This sequence belongs to the ArgJ family. As to quaternary structure, heterodimer of an alpha and a beta chain. Post-translationally, the alpha and beta chains are autoproteolytically processed from a single precursor protein within the mitochondrion.

It localises to the mitochondrion matrix. It catalyses the reaction N(2)-acetyl-L-ornithine + L-glutamate = N-acetyl-L-glutamate + L-ornithine. The catalysed reaction is L-glutamate + acetyl-CoA = N-acetyl-L-glutamate + CoA + H(+). The protein operates within amino-acid biosynthesis; L-arginine biosynthesis; L-ornithine and N-acetyl-L-glutamate from L-glutamate and N(2)-acetyl-L-ornithine (cyclic): step 1/1. It functions in the pathway amino-acid biosynthesis; L-arginine biosynthesis; N(2)-acetyl-L-ornithine from L-glutamate: step 1/4. Its function is as follows. Catalyzes two activities which are involved in the cyclic version of arginine biosynthesis: the synthesis of acetylglutamate from glutamate and acetyl-CoA, and of ornithine by transacetylation between acetylornithine and glutamate. The chain is Arginine biosynthesis bifunctional protein ArgJ, mitochondrial from Aspergillus oryzae (strain ATCC 42149 / RIB 40) (Yellow koji mold).